The chain runs to 318 residues: sn-1 stearoyl-lipid 9-desaturase (318 aa).

2 consecutive transmembrane segments (helical) span residues 56-76 (VIFF…PQFF) and 80-100 (AVGM…TLGF). The short motif at 101–106 (HRCISH) is the Histidine box-1 element. A helical transmembrane segment spans residues 117–137 (YIFVICGTLACQGGVFEWVGL). Residues 138 to 142 (HRMHH) carry the Histidine box-2 motif. The chain crosses the membrane as a helical span at residues 201–221 (VALGLILFALGGWPFVIWGIF). The short motif at 271–275 (HHAYQ) is the Histidine box-3 element.

Belongs to the fatty acid desaturase type 2 family. Fe(2+) is required as a cofactor.

The protein localises to the cellular thylakoid membrane. It carries out the reaction a 1-octadecanoyl 2-acyl-glycerolipid + 2 reduced [2Fe-2S]-[ferredoxin] + O2 + 2 H(+) = a 1-[(9Z)-octadecenoyl]-2-acyl-glycerolipid + 2 oxidized [2Fe-2S]-[ferredoxin] + 2 H2O. The protein operates within lipid metabolism; polyunsaturated fatty acid biosynthesis. In terms of biological role, desaturase involved in fatty acid biosynthesis. Introduces a double bond at carbon 9 of stearoyl groups (18:0) attached to the sn-1 position of the glycerol moiety of membrane glycerolipids. Does not desaturate palmitic acid (16:0), palmitoleic acid (16:1) and cis-vaccenic acid (18:1). In Synechocystis sp. (strain ATCC 27184 / PCC 6803 / Kazusa), this protein is sn-1 stearoyl-lipid 9-desaturase.